A 452-amino-acid polypeptide reads, in one-letter code: Protein EARLY-RESPONSIVE TO DEHYDRATION 7, chloroplastic (452 aa).

The span at 1–18 shows a compositional bias: polar residues; that stretch reads MESSGDKQTSSLYPTVDT. Residues 1–28 constitute a chloroplast transit peptide; that stretch reads MESSGDKQTSSLYPTVDTSNPEAPINPS. A disordered region spans residues 1–37; that stretch reads MESSGDKQTSSLYPTVDTSNPEAPINPSSSSSTNNLY. Residues 19–37 are compositionally biased toward low complexity; it reads SNPEAPINPSSSSSTNNLY. The Senescence domain occupies 258-426; that stretch reads IATGSGHLIK…AWVAFKIRKA (169 aa).

It is found in the plastid. The protein resides in the chloroplast. The protein is Protein EARLY-RESPONSIVE TO DEHYDRATION 7, chloroplastic of Arabidopsis thaliana (Mouse-ear cress).